The chain runs to 132 residues: Fatty acid-binding protein type 2 (132 aa).

Ala2 carries the post-translational modification N-acetylalanine.

Belongs to the calycin superfamily. Fatty-acid binding protein (FABP) family.

The chain is Fatty acid-binding protein type 2 from Fasciola hepatica (Liver fluke).